The following is a 236-amino-acid chain: Endonuclease V (236 aa).

Mg(2+) is bound by residues Asp47 and Asp115.

It belongs to the endonuclease V family. It depends on Mg(2+) as a cofactor.

The protein resides in the cytoplasm. The catalysed reaction is Endonucleolytic cleavage at apurinic or apyrimidinic sites to products with a 5'-phosphate.. DNA repair enzyme involved in the repair of deaminated bases. Selectively cleaves double-stranded DNA at the second phosphodiester bond 3' to a deoxyinosine leaving behind the intact lesion on the nicked DNA. This Xanthomonas campestris pv. campestris (strain 8004) protein is Endonuclease V.